A 229-amino-acid polypeptide reads, in one-letter code: Non-structural protein P8 (229 aa).

Transmembrane regions (helical) follow at residues isoleucine 119–leucine 139 and serine 162–alanine 182.

The protein belongs to the orbivirus NS3 family. Forms homooligomers via coiled-coil motif. Interacts with host OPTN; this interaction inhibits innate immune response.

The protein resides in the host cell membrane. It localises to the host Golgi apparatus. Its function is as follows. Plays a role in the inhibition of host innate immune response. Interacts with host OPTN and thus inhibits the recruitment of TBK1 to the host Golgi apparatus. In turn, downstream partner IRF3 cannot be activated and IFN-beta production is impaired. In terms of biological role, facilitates viral particle release either by increasing plasma membrane permeability through a viroporin-like activity or by viral budding. In Bluetongue virus 1 (isolate Australia) (BTV 1), this protein is Non-structural protein P8 (Segment-10).